A 213-amino-acid polypeptide reads, in one-letter code: Glycerol-3-phosphate acyltransferase (213 aa).

Transmembrane regions (helical) follow at residues 4-24 (IILLLIASYLLGAIPFGLWIG), 48-68 (ILGVKAGISVFAFDLLKGTLA), 71-91 (LPLFFHINGVSPLIFGLLAVI), 113-133 (VILGFSPLFLIYLLVVFIIVL), 144-164 (VIGAVFALLGILIFPSIGFIL), and 165-185 (TSYDLLFSIIIFVLAIIIILR).

It belongs to the PlsY family. As to quaternary structure, probably interacts with PlsX.

It localises to the cell membrane. The enzyme catalyses an acyl phosphate + sn-glycerol 3-phosphate = a 1-acyl-sn-glycero-3-phosphate + phosphate. It functions in the pathway lipid metabolism; phospholipid metabolism. In terms of biological role, catalyzes the transfer of an acyl group from acyl-phosphate (acyl-PO(4)) to glycerol-3-phosphate (G3P) to form lysophosphatidic acid (LPA). This enzyme utilizes acyl-phosphate as fatty acyl donor, but not acyl-CoA or acyl-ACP. The sequence is that of Glycerol-3-phosphate acyltransferase from Lactococcus lactis subsp. lactis (strain IL1403) (Streptococcus lactis).